The primary structure comprises 309 residues: Wall-associated proteinase (309 aa).

Residues Asn190 and Asn295 are each glycosylated (N-linked (GlcNAc...) asparagine).

The protein resides in the secreted. It is found in the cell wall. The protein localises to the membrane. Its function is as follows. May participate in wall plasticization and/or intussusception or in cell wall turnover. The polypeptide is Wall-associated proteinase (Coccidioides posadasii (strain RMSCC 757 / Silveira) (Valley fever fungus)).